The primary structure comprises 105 residues: Large ribosomal subunit protein uL24 (105 aa).

This sequence belongs to the universal ribosomal protein uL24 family. As to quaternary structure, part of the 50S ribosomal subunit.

In terms of biological role, one of two assembly initiator proteins, it binds directly to the 5'-end of the 23S rRNA, where it nucleates assembly of the 50S subunit. Functionally, one of the proteins that surrounds the polypeptide exit tunnel on the outside of the subunit. This is Large ribosomal subunit protein uL24 from Tolumonas auensis (strain DSM 9187 / NBRC 110442 / TA 4).